The primary structure comprises 306 residues: Ribonuclease Z (306 aa).

Zn(2+) is bound by residues histidine 63, histidine 65, aspartate 67, histidine 68, histidine 140, aspartate 211, and histidine 269. Aspartate 67 acts as the Proton acceptor in catalysis.

Belongs to the RNase Z family. As to quaternary structure, homodimer. The cofactor is Zn(2+).

It carries out the reaction Endonucleolytic cleavage of RNA, removing extra 3' nucleotides from tRNA precursor, generating 3' termini of tRNAs. A 3'-hydroxy group is left at the tRNA terminus and a 5'-phosphoryl group is left at the trailer molecule.. In terms of biological role, zinc phosphodiesterase, which displays some tRNA 3'-processing endonuclease activity. Probably involved in tRNA maturation, by removing a 3'-trailer from precursor tRNA. This chain is Ribonuclease Z, found in Listeria welshimeri serovar 6b (strain ATCC 35897 / DSM 20650 / CCUG 15529 / CIP 8149 / NCTC 11857 / SLCC 5334 / V8).